Consider the following 219-residue polypeptide: Protein-L-isoaspartate O-methyltransferase (219 aa).

Ser66 is an active-site residue.

Belongs to the methyltransferase superfamily. L-isoaspartyl/D-aspartyl protein methyltransferase family.

The protein localises to the cytoplasm. The enzyme catalyses [protein]-L-isoaspartate + S-adenosyl-L-methionine = [protein]-L-isoaspartate alpha-methyl ester + S-adenosyl-L-homocysteine. Catalyzes the methyl esterification of L-isoaspartyl residues in peptides and proteins that result from spontaneous decomposition of normal L-aspartyl and L-asparaginyl residues. It plays a role in the repair and/or degradation of damaged proteins. The protein is Protein-L-isoaspartate O-methyltransferase of Xanthobacter autotrophicus (strain ATCC BAA-1158 / Py2).